The following is a 370-amino-acid chain: Gap junction delta-4 protein (370 aa).

At 1 to 19 the chain is on the cytoplasmic side; the sequence is MEGVDLLGFLIITLNCNVT. Residues 20–40 traverse the membrane as a helical segment; it reads MVGKLWFVLTMLLRMLVIVLA. The Extracellular segment spans residues 41 to 76; sequence GRPVYQDEQERFVCNTLQPGCANVCYDVFSPVSHLR. Residues 77-97 traverse the membrane as a helical segment; it reads FWLIQGVCVLLPSAVFSVYVL. Residues 98-146 are Cytoplasmic-facing; the sequence is HRGATLAALGPRRCPDPREPASGQRRCPRPFGERGGLQVPDFSAGYIIH. The chain crosses the membrane as a helical span at residues 147-167; sequence LLLRTLLEAAFGALHYFLFGF. The Extracellular portion of the chain corresponds to 168–196; sequence LAPKKFPCTRPPCTGVVDCYVSRPTEKSL. Residues 197 to 217 form a helical membrane-spanning segment; it reads LMLFLWAVSALSFLLGLADLV. Over 218–370 the chain is Cytoplasmic; the sequence is CSLRRRMRRR…HLRARKSEWV (153 aa). The tract at residues 224 to 370 is disordered; the sequence is MRRRPGPPTS…HLRARKSEWV (147 aa). Basic and acidic residues predominate over residues 246–260; sequence AEGRRTDEEGGREEE. The span at 331–346 shows a compositional bias: low complexity; the sequence is PSAAPSRLAAPPSCSS.

Belongs to the connexin family. Delta-type subfamily. In terms of assembly, a connexon is composed of a hexamer of connexins. Expressed in pancreas, kidney, skeletal muscle, liver, placenta, and heart.

The protein resides in the cell membrane. It localises to the cell junction. Its subcellular location is the gap junction. Its function is as follows. One gap junction consists of a cluster of closely packed pairs of transmembrane channels, the connexons, through which materials of low MW diffuse from one cell to a neighboring cell. The protein is Gap junction delta-4 protein (GJD4) of Homo sapiens (Human).